A 117-amino-acid polypeptide reads, in one-letter code: Protein Wnt-6 (117 aa).

The O-palmitoleoyl serine; by PORCN moiety is linked to residue Ser-1. A disulfide bridge connects residues Cys-83 and Cys-98. Asn-84 carries an N-linked (GlcNAc...) asparagine glycan.

It belongs to the Wnt family. In terms of processing, palmitoleoylation is required for efficient binding to frizzled receptors. Depalmitoleoylation leads to Wnt signaling pathway inhibition.

Its subcellular location is the secreted. The protein localises to the extracellular space. It localises to the extracellular matrix. In terms of biological role, ligand for members of the frizzled family of seven transmembrane receptors. Probable developmental protein. May be a signaling molecule which affects the development of discrete regions of tissues. Is likely to signal over only few cell diameters. In Evasterias troschelii (Mottled sea star), this protein is Protein Wnt-6 (WNT-6).